The chain runs to 604 residues: Nuclear factor erythroid 2-related factor 2 (604 aa).

The DLG motif signature appears at 29-31 (DLG). Ser-40 carries the phosphoserine; by PKC modification. The ETGE motif motif lies at 79-82 (ETGE). Ser-214 is subject to Phosphoserine. Residues 334 to 447 (TVEFNDSDSG…VPFTKDKHSS (114 aa)) form a disordered region. Polar residues-rich tracts occupy residues 340 to 352 (SDSGISLNTSPSR) and 395 to 407 (PTHSSGDTVQPLS). N-linked (Glc) (glycation) lysine glycosylation is found at Lys-461, Lys-471, and Lys-486. A bZIP domain is found at 496-559 (LIRDIRRRGK…HLLKRKLSTL (64 aa)). N-linked (Glc) (glycation) arginine glycosylation is present at Arg-498. The basic motif stretch occupies residues 498 to 517 (RDIRRRGKNKVAAQNCRKRK). The tract at residues 521-528 (IVELEQDL) is leucine-zipper. Arg-568 carries N-linked (Glc) (glycation) arginine glycosylation. Positions 570–604 (EDGKPYSPSEYSLQQTRDGNVFLVPKSKKPDTKKN) are disordered. Lys-573 carries an N-linked (Glc) (glycation) lysine glycan. A compositionally biased stretch (polar residues) spans 578 to 587 (SEYSLQQTRD). The interval 590 to 595 (VFLVPK) is mediates interaction with CHD6 and is necessary to activate transcription. N6-acetyllysine; by CREBBP is present on residues Lys-595 and Lys-598.

It belongs to the bZIP family. CNC subfamily. Heterodimer; heterodimerizes with small Maf proteins. Interacts (via the bZIP domain) with MAFG and MAFK; required for binding to antioxidant response elements (AREs) on DNA. Interacts with KEAP1; the interaction is direct and promotes ubiquitination by the BCR(KEAP1) E3 ubiquitin ligase complex. Forms a ternary complex with PGAM5 and KEAP1. Interacts with EEF1D at heat shock promoter elements (HSE). Interacts via its leucine-zipper domain with the coiled-coil domain of PMF1. Interacts with CHD6; involved in activation of the transcription. Interacts with ESRRB; represses NFE2L2 transcriptional activity. Interacts with MOTS-c, a peptide produced by the mitochondrially encoded 12S rRNA MT-RNR1; the interaction occurs in the nucleus following metabolic stress. Ubiquitinated in the cytoplasm by the BCR(KEAP1) E3 ubiquitin ligase complex leading to its degradation. In response to oxidative stress, electrophile metabolites, such as sulforaphane, modify KEAP1, leading to inhibit activity of the BCR(KEAP1) complex, promoting NFE2L2/NRF2 nuclear accumulation and activity. In response to autophagy, the BCR(KEAP1) complex is inactivated. Post-translationally, phosphorylated by EIF2AK3/PERK following unfolded protein response (UPR), promoting dissociation from its cytoplasmic inhibitor KEAP1, followed by its translocation into the nucleus. Phosphorylation of Ser-40 by PKC in response to oxidative stress dissociates NFE2L2 from its cytoplasmic inhibitor KEAP1, promoting its translocation into the nucleus. In terms of processing, acetylation at Lys-595 and Lys-598 increases nuclear localization whereas deacetylation by SIRT1 enhances cytoplasmic presence. Glycation impairs transcription factor activity by preventing heterodimerization with small Maf proteins. Deglycation by FN3K restores activity.

The protein resides in the cytoplasm. It is found in the cytosol. Its subcellular location is the nucleus. Functionally, transcription factor that plays a key role in the response to oxidative stress: binds to antioxidant response (ARE) elements present in the promoter region of many cytoprotective genes, such as phase 2 detoxifying enzymes, and promotes their expression, thereby neutralizing reactive electrophiles. In normal conditions, ubiquitinated and degraded in the cytoplasm by the BCR(KEAP1) complex. In response to oxidative stress, electrophile metabolites inhibit activity of the BCR(KEAP1) complex, promoting nuclear accumulation of NFE2L2/NRF2, heterodimerization with one of the small Maf proteins and binding to ARE elements of cytoprotective target genes. The NFE2L2/NRF2 pathway is also activated in response to selective autophagy: autophagy promotes interaction between KEAP1 and SQSTM1/p62 and subsequent inactivation of the BCR(KEAP1) complex, leading to NFE2L2/NRF2 nuclear accumulation and expression of cytoprotective genes. The NFE2L2/NRF2 pathway is also activated during the unfolded protein response (UPR), contributing to redox homeostasis and cell survival following endoplasmic reticulum stress. May also be involved in the transcriptional activation of genes of the beta-globin cluster by mediating enhancer activity of hypersensitive site 2 of the beta-globin locus control region. Also plays an important role in the regulation of the innate immune response. It is a critical regulator of the innate immune response and survival during sepsis by maintaining redox homeostasis and restraint of the dysregulation of pro-inflammatory signaling pathways like MyD88-dependent and -independent and TNF-alpha signaling. Suppresses macrophage inflammatory response by blocking pro-inflammatory cytokine transcription and the induction of IL6. Binds to the proximity of pro-inflammatory genes in macrophages and inhibits RNA Pol II recruitment. The inhibition is independent of the Nrf2-binding motif and reactive oxygen species level. Represses antiviral cytosolic DNA sensing by suppressing the expression of the adapter protein STING1 and decreasing responsiveness to STING1 agonists while increasing susceptibility to infection with DNA viruses. This is Nuclear factor erythroid 2-related factor 2 from Rattus norvegicus (Rat).